We begin with the raw amino-acid sequence, 453 residues long: Bifunctional protein GlmU (453 aa).

Positions 1-226 (MTLDVVILAA…ALEVEGVNNR (226 aa)) are pyrophosphorylase. Residues 8–11 (LAAG), K22, Q73, 78–79 (GT), 99–101 (YGD), G136, E151, N166, and N224 contribute to the UDP-N-acetyl-alpha-D-glucosamine site. D101 contacts Mg(2+). N224 serves as a coordination point for Mg(2+). Positions 227 to 247 (SQMAALERAYQRDRAERLLTE) are linker. The N-acetyltransferase stretch occupies residues 248-453 (GVALADPARF…AGWKRPRKSS (206 aa)). Residues R330 and K348 each coordinate UDP-N-acetyl-alpha-D-glucosamine. Catalysis depends on H360, which acts as the Proton acceptor. Residues Y363 and N374 each contribute to the UDP-N-acetyl-alpha-D-glucosamine site. Acetyl-CoA contacts are provided by residues A377, 383–384 (NY), S402, A420, and R437.

This sequence in the N-terminal section; belongs to the N-acetylglucosamine-1-phosphate uridyltransferase family. In the C-terminal section; belongs to the transferase hexapeptide repeat family. As to quaternary structure, homotrimer. The cofactor is Mg(2+).

It localises to the cytoplasm. The enzyme catalyses alpha-D-glucosamine 1-phosphate + acetyl-CoA = N-acetyl-alpha-D-glucosamine 1-phosphate + CoA + H(+). It catalyses the reaction N-acetyl-alpha-D-glucosamine 1-phosphate + UTP + H(+) = UDP-N-acetyl-alpha-D-glucosamine + diphosphate. It functions in the pathway nucleotide-sugar biosynthesis; UDP-N-acetyl-alpha-D-glucosamine biosynthesis; N-acetyl-alpha-D-glucosamine 1-phosphate from alpha-D-glucosamine 6-phosphate (route II): step 2/2. It participates in nucleotide-sugar biosynthesis; UDP-N-acetyl-alpha-D-glucosamine biosynthesis; UDP-N-acetyl-alpha-D-glucosamine from N-acetyl-alpha-D-glucosamine 1-phosphate: step 1/1. Its pathway is bacterial outer membrane biogenesis; LPS lipid A biosynthesis. Functionally, catalyzes the last two sequential reactions in the de novo biosynthetic pathway for UDP-N-acetylglucosamine (UDP-GlcNAc). The C-terminal domain catalyzes the transfer of acetyl group from acetyl coenzyme A to glucosamine-1-phosphate (GlcN-1-P) to produce N-acetylglucosamine-1-phosphate (GlcNAc-1-P), which is converted into UDP-GlcNAc by the transfer of uridine 5-monophosphate (from uridine 5-triphosphate), a reaction catalyzed by the N-terminal domain. This is Bifunctional protein GlmU from Chromohalobacter salexigens (strain ATCC BAA-138 / DSM 3043 / CIP 106854 / NCIMB 13768 / 1H11).